The sequence spans 190 residues: MPSLPTLQPLDLYRRTLACLVLAVSCLGGGGLWADDARTSIEQRSNAVSQVLLGIFSYVRWPKEPAVLQLCVVGPTEYADGLLRGMVQANGRRVHAERRAVDNPDLGTLCNVIYLGVVDERERQQVFRSLAGHPVLSISERGTECSVGSMFCLNVGGPRITFEANLDSIARSGVRVHPSVLKLARRQATP.

Arginine 60 is a binding site for GMP. Intrachain disulfides connect cysteine 71–cysteine 110 and cysteine 145–cysteine 152. GMP-binding residues include arginine 175 and histidine 177.

Homodimer. Interacts with TpbB/YfiN. Interacts with YfiB. The YfiB-YfiR complex is a 2:2 heterotetramer. In terms of processing, cys-71 and Cys-110 form a disulfide bond in the oxidized form but maintain their free form in the non-oxidized YfiR structure. The Cys-145-Cys-152 disulfide bond is well formed in both structures. The Cys145-Cys152 disulfide bond, but not Cys-71-Cys-110, plays an important role in maintaining the correct folding of the protein.

Its subcellular location is the periplasm. With respect to regulation, tpbB/YfiN repression is released through an YfiB-dependent sequestration of YfiR to the outer membrane. Binds vitamin B6 (VB6) or L-Trp at the periphery of the dimer, and both VB6 and L-Trp are able to reduce biofilm formation induced by YfiB L43P mutant. However, VB6 or L-Trp alone may have little effects in interrupting the YfiB-YfiR interaction. GMP enhances the binding affinity between YfiB and YfiR. Its function is as follows. Negatively regulates the activity of the diguanylate cyclase TpbB/YfiN, leading to decreased c-di-GMP production. Inhibits TpbB/YfiN allosterically, through a hydrophobic interaction between the C-terminus of YfiR and a conserved region of the periplasmic PAS domain of TpbB/YfiN. Under reducing conditions, may also act as an YfiB-independent sensing device that is able to activate TpbB/YfiN in response to the redox status of the periplasm. Part of the YfiB-TpbB-YfiR (or yfiBNR) system, encoding a tripartite signaling module that modulates intracellular c-di-GMP levels. The system is a key regulator of the small colony variant (SCV) phenotype, and plays an important role in biofilm formation and in vivo persistence. The c-di-GMP produced by TpbB/YfiN stimulates the production of the Pel and Psl exopolysaccharides, which promotes surface attachment, generates an SCV phenotype and confers resistance against phagocytosis. This chain is Negative regulator YfiR, found in Pseudomonas aeruginosa (strain ATCC 15692 / DSM 22644 / CIP 104116 / JCM 14847 / LMG 12228 / 1C / PRS 101 / PAO1).